A 466-amino-acid chain; its full sequence is tRNA modification GTPase MnmE (466 aa).

The (6S)-5-formyl-5,6,7,8-tetrahydrofolate site is built by Arg-24, Glu-85, and Lys-128. The 161-residue stretch at 224–384 (GLNIVLAGQP…LRTELLHLVG (161 aa)) folds into the TrmE-type G domain. Residue Asn-234 coordinates K(+). GTP contacts are provided by residues 234–239 (NVGKSS), 253–259 (TPIAGTT), and 278–281 (DTAG). A Mg(2+)-binding site is contributed by Ser-238. K(+) is bound by residues Thr-253, Ile-255, and Thr-258. Thr-259 contributes to the Mg(2+) binding site. Lys-466 provides a ligand contact to (6S)-5-formyl-5,6,7,8-tetrahydrofolate.

The protein belongs to the TRAFAC class TrmE-Era-EngA-EngB-Septin-like GTPase superfamily. TrmE GTPase family. Homodimer. Heterotetramer of two MnmE and two MnmG subunits. It depends on K(+) as a cofactor.

It is found in the cytoplasm. Exhibits a very high intrinsic GTPase hydrolysis rate. Involved in the addition of a carboxymethylaminomethyl (cmnm) group at the wobble position (U34) of certain tRNAs, forming tRNA-cmnm(5)s(2)U34. The protein is tRNA modification GTPase MnmE of Herminiimonas arsenicoxydans.